The chain runs to 95 residues: Co-chaperonin GroES (95 aa).

This sequence belongs to the GroES chaperonin family. In terms of assembly, heptamer of 7 subunits arranged in a ring. Interacts with the chaperonin GroEL.

It is found in the cytoplasm. Functionally, together with the chaperonin GroEL, plays an essential role in assisting protein folding. The GroEL-GroES system forms a nano-cage that allows encapsulation of the non-native substrate proteins and provides a physical environment optimized to promote and accelerate protein folding. GroES binds to the apical surface of the GroEL ring, thereby capping the opening of the GroEL channel. In Syntrophotalea carbinolica (strain DSM 2380 / NBRC 103641 / GraBd1) (Pelobacter carbinolicus), this protein is Co-chaperonin GroES.